A 246-amino-acid polypeptide reads, in one-letter code: Putative outer membrane protein YiaT (246 aa).

The signal sequence occupies residues 1–21 (MLINRNIVALFALPFMASATA).

This sequence belongs to the MipA/OmpV family.

Its subcellular location is the cell outer membrane. This chain is Putative outer membrane protein YiaT (yiaT), found in Escherichia coli O157:H7.